The sequence spans 146 residues: Hemoglobin subunit beta (146 aa).

At Val1 the chain carries N-acetylvaline. The region spanning 2 to 146 (HLTGEEKSTV…VATALAHKYH (145 aa)) is the Globin domain. Position 44 is a phosphoserine (Ser44). The residue at position 59 (Lys59) is an N6-acetyllysine. A heme b-binding site is contributed by His63. At Lys82 the chain carries N6-acetyllysine. A heme b-binding site is contributed by His92. At Cys93 the chain carries S-nitrosocysteine. Lys144 is subject to N6-acetyllysine.

The protein belongs to the globin family. As to quaternary structure, heterotetramer of two alpha chains and two beta chains. In terms of tissue distribution, red blood cells.

Its function is as follows. Involved in oxygen transport from the lung to the various peripheral tissues. This Macrotus californicus (Californian leaf-nosed bat) protein is Hemoglobin subunit beta (HBB).